Here is a 192-residue protein sequence, read N- to C-terminus: A-type ATP synthase subunit E (192 aa).

It belongs to the V-ATPase E subunit family. As to quaternary structure, has multiple subunits with at least A(3), B(3), C, D, E, F, H, I and proteolipid K(x).

The protein localises to the cell membrane. In terms of biological role, component of the A-type ATP synthase that produces ATP from ADP in the presence of a proton gradient across the membrane. The protein is A-type ATP synthase subunit E of Sulfolobus acidocaldarius (strain ATCC 33909 / DSM 639 / JCM 8929 / NBRC 15157 / NCIMB 11770).